A 249-amino-acid chain; its full sequence is Probable transcriptional regulatory protein Dtur_1615 (249 aa).

This sequence belongs to the TACO1 family.

It localises to the cytoplasm. This chain is Probable transcriptional regulatory protein Dtur_1615, found in Dictyoglomus turgidum (strain DSM 6724 / Z-1310).